We begin with the raw amino-acid sequence, 377 residues long: MGEIQTLNAKQNAGQPVIRLSGISKSFDGKEIIGNLNLDVNHGEFLTILGPSGCGKTTVLRMIAGFETADNGQITIDNQDVTNVPAEQRHVNTVFQSYALFPHMTVFDNVAFGLRMQKVPAAEIEPRVMDALKMVRLESMAQRKPHQLSGGQQQRIAIARAVVNKPKVLLLDESLSALDYKLRKQMQIELKQLQRQLGITFIFVTHDQEEALSMSDRIIVMRSGVIEQDGSPREIYEDPKNLFVARFIGEINVFEATAKERLDENRIRAEIEGVDSVVYFDQPVTEGQKLQVLLRPEDLRIEEIKESEEKGIVGHVTERTYKGMTLDSVIETESGMRVMVSEFFNEDDPDVDHSLGQKVAITWVESWEVVLSDEQEI.

The ABC transporter domain maps to 18-248 (IRLSGISKSF…PKNLFVARFI (231 aa)). 50-57 (GPSGCGKT) is an ATP binding site.

Belongs to the ABC transporter superfamily. Spermidine/putrescine importer (TC 3.A.1.11.1) family. In terms of assembly, the complex is composed of two ATP-binding proteins (PotA), two transmembrane proteins (PotB and PotC) and a solute-binding protein (PotD).

Its subcellular location is the cell inner membrane. It carries out the reaction ATP + H2O + polyamine-[polyamine-binding protein]Side 1 = ADP + phosphate + polyamineSide 2 + [polyamine-binding protein]Side 1.. Its function is as follows. Part of the ABC transporter complex PotABCD involved in spermidine/putrescine import. Responsible for energy coupling to the transport system. The chain is Spermidine/putrescine import ATP-binding protein PotA from Vibrio vulnificus (strain CMCP6).